The sequence spans 558 residues: Potassium-transporting ATPase potassium-binding subunit (558 aa).

Transmembrane regions (helical) follow at residues 1 to 21, 66 to 86, 127 to 147, 166 to 186, 245 to 265, 281 to 301, 327 to 347, 354 to 374, 377 to 397, 416 to 436, 482 to 502, and 531 to 551; these read MEII…SGYL, FNGF…WLFL, MIVM…VCIA, IVRF…ILLM, IWSD…MLFL, ALIL…LTMW, FGAG…TGSV, LTPL…VFGG, VGLM…SLMV, IVLV…LAFM, ISTG…QLLI, and IVFI…LGPI.

This sequence belongs to the KdpA family. As to quaternary structure, the system is composed of three essential subunits: KdpA, KdpB and KdpC.

The protein resides in the cell membrane. Functionally, part of the high-affinity ATP-driven potassium transport (or Kdp) system, which catalyzes the hydrolysis of ATP coupled with the electrogenic transport of potassium into the cytoplasm. This subunit binds the extracellular potassium ions and delivers the ions to the membrane domain of KdpB through an intramembrane tunnel. The chain is Potassium-transporting ATPase potassium-binding subunit from Staphylococcus aureus (strain bovine RF122 / ET3-1).